Reading from the N-terminus, the 396-residue chain is MDLIETINAVVELQHRVRNLSPNTNIYQDGQTTINDYNAIASRCNGKVYNLRDQIAQLSPFQVHMPVIPISTILSTDDHETMSAGIESLFDVLAAAIRTEGSRQNRAVVTKSIEPEVLKAVLDIGIRSQFSENPYANMLQVDTAKMEQQLEPIDDPLASQRINMLAAGGATNNTGGGYHALVGRATGKTGIITIIQGRPGAVTFNLNMKVPCSGVLSLTLLPAPGVIQLSLGNQPPNNIPVHAECVDVSTVFTEGDIVIRFELAGRVVGNANKLGTLNFPLCDRISITIEPWNANKQNNANANFNNWPAGTAQRQPTISLFVNIINASSLIDYETHSKYLAGATYLMGTTFSEDSFIASPPNVVWTMSSLLSGAPPQYIHWTRKIACMIAAFSCKI.

This sequence belongs to the rotavirus VP6 family. Homotrimer. Interacts with the inner capsid protein VP2. Interacts with the outer capsid glycoprotein VP7.

It is found in the virion. Functionally, intermediate capsid protein that self assembles to form an icosahedral capsid with a T=13 symmetry, which consists of 230 trimers of VP6, with channels at each of its five-fold vertices. This capsid constitutes the middle concentric layer of the viral mature particle. The innermost VP2 capsid and the intermediate VP6 capsid remain intact following cell entry to protect the dsRNA from degradation and to prevent unfavorable antiviral responses in the host cell during all the replication cycle of the virus. Nascent transcripts are transcribed within the structural confines of this double-layered particle (DLP) and are extruded through the channels at the five-fold axes. VP6 is required for the transcription activity of the DLP. The sequence is that of Intermediate capsid protein VP6 from Homo sapiens (Human).